The primary structure comprises 248 residues: Transcription factor cicD (248 aa).

Over residues 1-22 (MVGSRHPDQCAKRWHHSLDPNV) the composition is skewed to basic and acidic residues. The tract at residues 1-25 (MVGSRHPDQCAKRWHHSLDPNVKRG) is disordered. Residues 19-74 (DPNVKRGPWTMEEDSSLLEAVQKIGRDWKEIGRELFPSRSTTDIKNRYVILSRRRG) form the HTH myb-type domain. The segment at residues 46–70 (WKEIGRELFPSRSTTDIKNRYVILS) is a DNA-binding region (H-T-H motif). Residues 186-208 (SELEGSFTSRNHEEPPQPLPVPD) are disordered.

The protein resides in the nucleus. Transcription factor that regulates the expression of the gene cluster that mediates the biosynthesis of cichorine, a phytotoxin active against knapweed, corn, and soybeans. In Emericella nidulans (strain FGSC A4 / ATCC 38163 / CBS 112.46 / NRRL 194 / M139) (Aspergillus nidulans), this protein is Transcription factor cicD.